The following is a 409-amino-acid chain: S-adenosylmethionine synthase (409 aa).

ATP is bound at residue 141 to 146 (GQGSAD).

The protein belongs to the AdoMet synthase 2 family. Mg(2+) is required as a cofactor.

The catalysed reaction is L-methionine + ATP + H2O = S-adenosyl-L-methionine + phosphate + diphosphate. It functions in the pathway amino-acid biosynthesis; S-adenosyl-L-methionine biosynthesis; S-adenosyl-L-methionine from L-methionine: step 1/1. Catalyzes the formation of S-adenosylmethionine from methionine and ATP. This Hyperthermus butylicus (strain DSM 5456 / JCM 9403 / PLM1-5) protein is S-adenosylmethionine synthase.